A 188-amino-acid polypeptide reads, in one-letter code: Segregation and condensation protein B (188 aa).

The protein belongs to the ScpB family. Homodimer. Homodimerization may be required to stabilize the binding of ScpA to the Smc head domains. Component of a cohesin-like complex composed of ScpA, ScpB and the Smc homodimer, in which ScpA and ScpB bind to the head domain of Smc. The presence of the three proteins is required for the association of the complex with DNA.

It is found in the cytoplasm. Participates in chromosomal partition during cell division. May act via the formation of a condensin-like complex containing Smc and ScpA that pull DNA away from mid-cell into both cell halves. The chain is Segregation and condensation protein B from Lactococcus lactis subsp. cremoris (strain MG1363).